We begin with the raw amino-acid sequence, 140 residues long: MAKKVKAIVKLQIPAGKANPAPPIGPALGQHGINIMGFCKEYNDRTASMAGTIVPAEITIYDDRSFTFITKTPPAADLLKKAAGVEAGSGTPSKSVVAVISKGQLREIASVKMKDLNAVNIEGAERIIEGTARSMGIKVE.

It belongs to the universal ribosomal protein uL11 family. As to quaternary structure, part of the ribosomal stalk of the 50S ribosomal subunit. Interacts with L10 and the large rRNA to form the base of the stalk. L10 forms an elongated spine to which L12 dimers bind in a sequential fashion forming a multimeric L10(L12)X complex. In terms of processing, one or more lysine residues are methylated.

Forms part of the ribosomal stalk which helps the ribosome interact with GTP-bound translation factors. The protein is Large ribosomal subunit protein uL11 of Dehalococcoides mccartyi (strain ATCC BAA-2266 / KCTC 15142 / 195) (Dehalococcoides ethenogenes (strain 195)).